The chain runs to 401 residues: Mu-type opioid receptor (401 aa).

Over 1-69 (MDSSADPRNA…CPPTGSPSMV (69 aa)) the chain is Extracellular. N-linked (GlcNAc...) asparagine glycosylation is found at N9, N12, N34, N41, and N49. Residues 70–94 (TAITIMALYSIVCVVGLFGNFLVMY) traverse the membrane as a helical segment. Over 95 to 107 (VIVRYTKMKTATN) the chain is Cytoplasmic. A helical transmembrane segment spans residues 108–132 (IYIFNLALADALATSTLPFQSVNYL). Over 133-143 (MGTWPFGTILC) the chain is Extracellular. Cysteines 143 and 220 form a disulfide. A helical transmembrane segment spans residues 144-166 (KIVISIDYYNMFTSIFTLCTMSV). Topologically, residues 167-186 (DRYIAVCHPVKALDFRTPRN) are cytoplasmic. A Phosphotyrosine modification is found at Y169. A helical transmembrane segment spans residues 187-208 (AKIINVCNWILSSAIGLPVMFM). Residues 209 to 231 (ATTKYRNGSIDCALTFSHPTWYW) lie on the Extracellular side of the membrane. Residues 232–256 (ENLLKICVFIFAFIMPVLIITVCYG) traverse the membrane as a helical segment. At 257 to 280 (LMILRLKSVRMLSGSKEKDRNLRR) the chain is on the cytoplasmic side. A helical membrane pass occupies residues 281-307 (ITRMVLVVVAVFIVCWTPIHIYVIIKA). Over 308 to 315 (LITIPETT) the chain is Extracellular. Residues 316–339 (FQTVSWHFCIALGYTNSCLNPVLY) traverse the membrane as a helical segment. The short motif at 335-339 (NPVLY) is the NPxxY; plays a role in stabilizing the activated conformation of the receptor element. At 340-401 (AFLDENFKRC…NLEAETAPLP (62 aa)) the chain is on the cytoplasmic side. A lipid anchor (S-palmitoyl cysteine) is attached at C354. The tract at residues 365 to 385 (NSARIRQNTRDHPSTANTVDR) is disordered. S366 carries the phosphoserine modification. A Phosphothreonine modification is found at T373. S378 is subject to Phosphoserine. A Phosphothreonine modification is found at T397.

It belongs to the G-protein coupled receptor 1 family. In terms of assembly, forms homooligomers and heterooligomers with other GPCRs, such as OPRD1, OPRK1, OPRL1, NPFFR2, ADRA2A, SSTR2, CNR1 and CCR5 (probably in dimeric forms). Interacts with heterotrimeric G proteins; interaction with a heterotrimeric complex containing GNAI1, GNB1 and GNG2 stabilizes the active conformation of the receptor and increases its affinity for endomorphin-2, the synthetic opioid peptide DAMGO and for morphinan agonists. Interacts with PPL; the interaction disrupts agonist-mediated G-protein activation. Interacts (via C-terminus) with DNAJB4 (via C-terminus). Interacts with calmodulin; the interaction inhibits the constitutive activity of OPRM1; it abolishes basal and attenuates agonist-stimulated G-protein coupling. Interacts with FLNA, PLD2, RANBP9 and WLS and GPM6A. Interacts with RTP4. Interacts with SYP and GNAS. Interacts with RGS9, RGS17, RGS20, RGS4, PPP1R9B and HINT1. In terms of processing, phosphorylated. Differentially phosphorylated in basal and agonist-induced conditions. Agonist-mediated phosphorylation modulates receptor internalization. Phosphorylated by GRK2 in a agonist-dependent manner. Phosphorylation at Tyr-169 requires receptor activation, is dependent on non-receptor protein tyrosine kinase Src and results in a decrease in agonist efficacy by reducing G-protein coupling efficiency. Phosphorylated on tyrosine residues; the phosphorylation is involved in agonist-induced G-protein-independent receptor down-regulation. Phosphorylation at Ser-378 is involved in G-protein-dependent but not beta-arrestin-dependent activation of the ERK pathway. Post-translationally, ubiquitinated. A basal ubiquitination seems not to be related to degradation. Ubiquitination is increased upon formation of OPRM1:OPRD1 oligomers leading to proteasomal degradation; the ubiquitination is diminished by RTP4.

The protein localises to the cell membrane. It is found in the cell projection. Its subcellular location is the axon. It localises to the perikaryon. The protein resides in the dendrite. The protein localises to the endosome. Functionally, receptor for endogenous opioids such as beta-endorphin and endomorphin. Receptor for natural and synthetic opioids including morphine, heroin, DAMGO, fentanyl, etorphine, buprenorphin and methadone. Also activated by enkephalin peptides, such as Met-enkephalin or Met-enkephalin-Arg-Phe, with higher affinity for Met-enkephalin-Arg-Phe. Agonist binding to the receptor induces coupling to an inactive GDP-bound heterotrimeric G-protein complex and subsequent exchange of GDP for GTP in the G-protein alpha subunit leading to dissociation of the G-protein complex with the free GTP-bound G-protein alpha and the G-protein beta-gamma dimer activating downstream cellular effectors. The agonist- and cell type-specific activity is predominantly coupled to pertussis toxin-sensitive G(i) and G(o) G alpha proteins, GNAI1, GNAI2, GNAI3 and GNAO1, and to a lesser extent to pertussis toxin-insensitive G alpha proteins GNAZ and GNA15. They mediate an array of downstream cellular responses, including inhibition of adenylate cyclase activity and both N-type and L-type calcium channels, activation of inward rectifying potassium channels, mitogen-activated protein kinase (MAPK), phospholipase C (PLC), phosphoinositide/protein kinase (PKC), phosphoinositide 3-kinase (PI3K) and regulation of NF-kappa-B. Also couples to adenylate cyclase stimulatory G alpha proteins. The selective temporal coupling to G-proteins and subsequent signaling can be regulated by RGSZ proteins, such as RGS9, RGS17 and RGS4. Phosphorylation by members of the GPRK subfamily of Ser/Thr protein kinases and association with beta-arrestins is involved in short-term receptor desensitization. Beta-arrestins associate with the GPRK-phosphorylated receptor and uncouple it from the G-protein thus terminating signal transduction. The phosphorylated receptor is internalized through endocytosis via clathrin-coated pits which involves beta-arrestins. The activation of the ERK pathway occurs either in a G-protein-dependent or a beta-arrestin-dependent manner and is regulated by agonist-specific receptor phosphorylation. Acts as a class A G-protein coupled receptor (GPCR) which dissociates from beta-arrestin at or near the plasma membrane and undergoes rapid recycling. Receptor down-regulation pathways are varying with the agonist and occur dependent or independent of G-protein coupling. Endogenous ligands induce rapid desensitization, endocytosis and recycling. Heterooligomerization with other GPCRs can modulate agonist binding, signaling and trafficking properties. Involved in neurogenesis. This is Mu-type opioid receptor (OPRM1) from Sus scrofa (Pig).